A 234-amino-acid polypeptide reads, in one-letter code: 2,3,4,5-tetrahydropyridine-2,6-dicarboxylate N-acetyltransferase (234 aa).

This sequence belongs to the transferase hexapeptide repeat family. DapH subfamily.

It carries out the reaction (S)-2,3,4,5-tetrahydrodipicolinate + acetyl-CoA + H2O = L-2-acetamido-6-oxoheptanedioate + CoA. The protein operates within amino-acid biosynthesis; L-lysine biosynthesis via DAP pathway; LL-2,6-diaminopimelate from (S)-tetrahydrodipicolinate (acetylase route): step 1/3. Its function is as follows. Catalyzes the transfer of an acetyl group from acetyl-CoA to tetrahydrodipicolinate. The protein is 2,3,4,5-tetrahydropyridine-2,6-dicarboxylate N-acetyltransferase of Lacticaseibacillus casei (strain BL23) (Lactobacillus casei).